Reading from the N-terminus, the 246-residue chain is Chaperone protein SefB (246 aa).

The signal sequence occupies residues 1–24 (MYILNKFIRRTVIFFFFCYLPIAS). The cysteines at positions 124 and 155 are disulfide-linked.

The protein belongs to the periplasmic pilus chaperone family.

It is found in the periplasm. Required for the biogenesis of the SefA (SEF14) fimbria. In Salmonella enteritidis, this protein is Chaperone protein SefB (sefB).